A 177-amino-acid polypeptide reads, in one-letter code: Myosin regulatory light chain 2 (177 aa).

The segment covering 1–16 has biased composition (basic residues); it reads MSRKSGSRSSSKRSKK. A disordered region spans residues 1–24; sequence MSRKSGSRSSSKRSKKSGGGSNVF. IgE-binding epitope regions lie at residues 13–30, 22–48, 49–66, 58–90, 79–99, and 118–141; these read RSKKSGGGSNVFDMFTQR, NVFDMFTQRQVAEFKEGFQLMDRDKDG, VIGKTDLRGTFDEIGRIA, TFDEIGRIATDQELDEMLADAPAPINFTMLLNM, PAPINFTMLLNMFAERQTGES, and NIDCDTFRHALMTWGDKFSSQEAD. The region spanning 30 to 65 is the EF-hand 1 domain; sequence RQVAEFKEGFQLMDRDKDGVIGKTDLRGTFDEIGRI. Ca(2+) contacts are provided by aspartate 43, aspartate 45, aspartate 47, and aspartate 54. The 36-residue stretch at 135-170 folds into the EF-hand 2 domain; that stretch reads FSSQEADDALDQMDIDDGGKIDVQGVIQMLTAGGGD.

In terms of assembly, myosin is a hexamer of 2 heavy chains and 4 light chains. In terms of tissue distribution, expressed in tail muscle (at protein level).

This Penaeus vannamei (Whiteleg shrimp) protein is Myosin regulatory light chain 2.